A 577-amino-acid polypeptide reads, in one-letter code: Adenine deaminase (577 aa).

It belongs to the metallo-dependent hydrolases superfamily. Adenine deaminase family. The cofactor is Mn(2+).

The catalysed reaction is adenine + H2O + H(+) = hypoxanthine + NH4(+). The polypeptide is Adenine deaminase (adeC) (Bacillus subtilis (strain 168)).